An 803-amino-acid chain; its full sequence is MDDIVMNGSPEVPPPQPPPEPVERPPTPPPPPPEESVAPPPPPEVVAPPPPPEDLPPAPPPPEPKKKKVGWGAKKPAATPLSVEELVRKKREADAAAARPKFLSRAERERIALEKRAKEVEAERRLKASNGVDRSATQSPSVSSEVNHSDGRTIPTGPRAMRSSDTPTAPAAMRNSHSHNKNRDLSPPPPPKSMSFGLASSKGDKRPVDDDEVAAQVALVKQRYMGADQTSTFSAKKKRKRTTDRKFNFEWNAEEDTSGDYNPLYQHRHEANFFGRGRLAGFGDDVADNVAKKYARALEDRDHEAGGIRAREILEMERRRREESTRNQLDKHWSEKKLEHMRERDWRIFKEDFNISTKGGSVPNPMRSWDESGLPKRLMELVNKVGYKEPTPIQRAAIPIAMQSRDLIGVAVTGSGKTASFLLPLLVYIAELPRIDEFEWRKNDGPYAIVLAPTRELAQQIEIEAKKFTEPLGFNVVSIVGGHSFEEQAYSLRNGAEIIIATPGRLVDCIERRMLVLSQCCYVIMDEADRMIDLGFEEPVNKILDALPVSNEKPDSEEAENSMAMSQHIGTKDRYRQTMMYTATMPTAVERIARKYLRRPAIVTIGSAGEAVDTVEQRVEFIAGEDKRKKRLGDILSSGEFRPPIIVFVNIKRNCDAIAREIKQWGFSSVTLHGSKTQEQREAALASVRNGQTDVLVATDLAGRGIDVPDVSLVINFNMATTIESYTHRIGRTGRAGKSGVAITFLGNEDTDVMYDLKQMIMKSSISRLPEELRKHEAAQSKPTRGFAKKNDDNSAFGSKGGW.

Disordered regions lie at residues 1–83 (MDDI…PLSV) and 115–210 (KRAK…PVDD). The span at 11 to 62 (EVPPPQPPPEPVERPPTPPPPPPEESVAPPPPPEVVAPPPPPEDLPPAPPPP) shows a compositional bias: pro residues. Basic and acidic residues predominate over residues 115–126 (KRAKEVEAERRL). Polar residues predominate over residues 135–146 (SATQSPSVSSEV). Residues 367–395 (RSWDESGLPKRLMELVNKVGYKEPTPIQR) carry the Q motif motif. A Helicase ATP-binding domain is found at 398-603 (IPIAMQSRDL…RKYLRRPAIV (206 aa)). 411-418 (AVTGSGKT) serves as a coordination point for ATP. The DEAD box signature appears at 526 to 529 (DEAD). Positions 614-777 (TVEQRVEFIA…RLPEELRKHE (164 aa)) constitute a Helicase C-terminal domain. A disordered region spans residues 773–803 (LRKHEAAQSKPTRGFAKKNDDNSAFGSKGGW).

It belongs to the DEAD box helicase family. DDX23/PRP28 subfamily. As to quaternary structure, component of the U5 snRNP complex.

Its subcellular location is the cytoplasm. The protein resides in the nucleus. It catalyses the reaction ATP + H2O = ADP + phosphate + H(+). Functionally, ATP-dependent RNA helicase involved in mRNA splicing. May destabilize the U1/5'-splice site duplex to permit an effective competition for the 5'-splice site by the U6 snRNA, resulting in the switch between U1 and U6 at the 5'-splice site. May also act to unwind the U4/U6 base-pairing interaction in the U4/U6/U5 snRNP, facilitating the first covalent step of splicing. This chain is Pre-mRNA-splicing ATP-dependent RNA helicase prp28 (prp28), found in Aspergillus oryzae (strain ATCC 42149 / RIB 40) (Yellow koji mold).